Consider the following 57-residue polypeptide: DNA-directed RNA polymerase subunit Rpo6 (57 aa).

This sequence belongs to the archaeal Rpo6/eukaryotic RPB6 RNA polymerase subunit family. Part of the RNA polymerase complex.

Its subcellular location is the cytoplasm. It carries out the reaction RNA(n) + a ribonucleoside 5'-triphosphate = RNA(n+1) + diphosphate. In terms of biological role, DNA-dependent RNA polymerase (RNAP) catalyzes the transcription of DNA into RNA using the four ribonucleoside triphosphates as substrates. The protein is DNA-directed RNA polymerase subunit Rpo6 of Methanocaldococcus jannaschii (strain ATCC 43067 / DSM 2661 / JAL-1 / JCM 10045 / NBRC 100440) (Methanococcus jannaschii).